The sequence spans 431 residues: Enolase (431 aa).

Gln167 is a (2R)-2-phosphoglycerate binding site. Residue Glu209 is the Proton donor of the active site. Mg(2+) is bound by residues Asp246, Glu290, and Asp317. Residues Lys342, Arg371, Ser372, and Lys393 each coordinate (2R)-2-phosphoglycerate. Catalysis depends on Lys342, which acts as the Proton acceptor.

It belongs to the enolase family. As to quaternary structure, component of the RNA degradosome, a multiprotein complex involved in RNA processing and mRNA degradation. Mg(2+) is required as a cofactor.

It is found in the cytoplasm. The protein localises to the secreted. The protein resides in the cell surface. It catalyses the reaction (2R)-2-phosphoglycerate = phosphoenolpyruvate + H2O. Its pathway is carbohydrate degradation; glycolysis; pyruvate from D-glyceraldehyde 3-phosphate: step 4/5. Functionally, catalyzes the reversible conversion of 2-phosphoglycerate (2-PG) into phosphoenolpyruvate (PEP). It is essential for the degradation of carbohydrates via glycolysis. In Enterobacter sp. (strain 638), this protein is Enolase.